The following is a 520-amino-acid chain: 2-isopropylmalate synthase (520 aa).

The Pyruvate carboxyltransferase domain occupies 5-267 (VIIFDTTLRD…HTNINHQEIY (263 aa)). Mn(2+) is bound by residues aspartate 14, histidine 202, histidine 204, and asparagine 238. The segment at 392-520 (RLDYFSVQSG…RLQQNNQEMV (129 aa)) is regulatory domain.

Belongs to the alpha-IPM synthase/homocitrate synthase family. LeuA type 1 subfamily. As to quaternary structure, homodimer. Mn(2+) serves as cofactor.

Its subcellular location is the cytoplasm. The enzyme catalyses 3-methyl-2-oxobutanoate + acetyl-CoA + H2O = (2S)-2-isopropylmalate + CoA + H(+). It functions in the pathway amino-acid biosynthesis; L-leucine biosynthesis; L-leucine from 3-methyl-2-oxobutanoate: step 1/4. Catalyzes the condensation of the acetyl group of acetyl-CoA with 3-methyl-2-oxobutanoate (2-ketoisovalerate) to form 3-carboxy-3-hydroxy-4-methylpentanoate (2-isopropylmalate). This is 2-isopropylmalate synthase from Yersinia enterocolitica serotype O:8 / biotype 1B (strain NCTC 13174 / 8081).